Consider the following 124-residue polypeptide: Sulfur globule protein CV2 (124 aa).

Residues 1–22 form the signal peptide; sequence MKKLATAAAVAALLGASASASA.

The protein envelope of the sulfur globules is composed of the three different proteins CV1, CV2 and CV3.

Functionally, structural protein of the sulfur globules, which are intracellular globules that serve for sulfur storage in purple sulfur bacteria. This chain is Sulfur globule protein CV2 (sgpB), found in Allochromatium vinosum (strain ATCC 17899 / DSM 180 / NBRC 103801 / NCIMB 10441 / D) (Chromatium vinosum).